We begin with the raw amino-acid sequence, 154 residues long: Ribonuclease H (154 aa).

Residues 7-148 (KPETVEIYTD…ADALAREGIA (142 aa)) enclose the RNase H type-1 domain. The Mg(2+) site is built by aspartate 16, glutamate 54, aspartate 76, and aspartate 140.

This sequence belongs to the RNase H family. As to quaternary structure, monomer. It depends on Mg(2+) as a cofactor.

The protein localises to the cytoplasm. It carries out the reaction Endonucleolytic cleavage to 5'-phosphomonoester.. In terms of biological role, endonuclease that specifically degrades the RNA of RNA-DNA hybrids. In Paramagnetospirillum magneticum (strain ATCC 700264 / AMB-1) (Magnetospirillum magneticum), this protein is Ribonuclease H.